A 212-amino-acid chain; its full sequence is MTTAARLGIGGPVGSGKTALLECIVPLLTNQGIEVAIVTNDLLTTEDAERLKSGGILPRDRIIGVETGSCPHTAIREDPTMNILAVQDLEQLFPNLNLIMIESGGDNLASTFSYDLVDAYIFVIDVGAGDDIPRKKGPGFMQADLVVINKIDLAPYVNANLNLIRKEASVYRQSKPIAYTNCKTGVGLNEVVNFILERVLFRTALSVKNLEK.

11-18 (GPVGSGKT) contacts GTP.

Belongs to the SIMIBI class G3E GTPase family. UreG subfamily. Homodimer. UreD, UreF and UreG form a complex that acts as a GTP-hydrolysis-dependent molecular chaperone, activating the urease apoprotein by helping to assemble the nickel containing metallocenter of UreC. The UreE protein probably delivers the nickel.

It localises to the cytoplasm. Facilitates the functional incorporation of the urease nickel metallocenter. This process requires GTP hydrolysis, probably effectuated by UreG. This is Urease accessory protein UreG from Trichodesmium erythraeum (strain IMS101).